Consider the following 320-residue polypeptide: Aldose reductase (320 aa).

Tyrosine 60 serves as the catalytic Proton donor. Histidine 121 contributes to the substrate binding site. 215 to 269 (SPLGSSEKNLAHDPVVEKVANKLNKTPGQVLIKWALQRGTSVIPKSSKDERIKEN) provides a ligand contact to NADP(+).

The protein belongs to the aldo/keto reductase family.

It catalyses the reaction an alditol + NAD(+) = an aldose + NADH + H(+). The catalysed reaction is an alditol + NADP(+) = an aldose + NADPH + H(+). The polypeptide is Aldose reductase (Hordeum vulgare (Barley)).